We begin with the raw amino-acid sequence, 494 residues long: Syntaphilin (494 aa).

Residues 1–75 are disordered; sequence MAMSLPGSRR…GIKPPTPEQY (75 aa). A compositionally biased stretch (low complexity) spans 7–49; sequence GSRRTSAGSRRRTSPPVSVRDAYGTSSLSSSSNSGSYKGSDSS. A coiled-coil region spans residues 79 to 161; that stretch reads LQQKEVCIRH…VKNNLIDKDK (83 aa). Disordered regions lie at residues 191-246 and 338-398; these read MAKE…SGFA and CGTD…GQSV. A phosphoserine mark is found at Ser200 and Ser204. A compositionally biased stretch (polar residues) spans 207-217; that stretch reads RSLTRSSTYTK. Thr214 carries the post-translational modification Phosphothreonine. Ser219 carries the post-translational modification Phosphoserine. Residues 230 to 246 show a composition bias toward low complexity; that stretch reads GDPSSGSAEDGADSGFA. Basic and acidic residues predominate over residues 344–353; sequence SGDRCPELDA. Residues 425–444 traverse the membrane as a helical segment; the sequence is YIVDLLAVVVPAVPTVAWLC.

Binds to STX1A. Interacts with DNM1; this interaction inhibits the binding of DNM1 to AMPH and DNM1-receptor-mediated endocytosis. Brain specific. Found in synapses.

It is found in the membrane. The protein resides in the synapse. The protein localises to the synaptosome. In terms of biological role, inhibits SNARE complex formation by absorbing free STX1A. The sequence is that of Syntaphilin from Homo sapiens (Human).